Here is a 418-residue protein sequence, read N- to C-terminus: Gamma-glutamyl phosphate reductase (418 aa).

This sequence belongs to the gamma-glutamyl phosphate reductase family.

It is found in the cytoplasm. It catalyses the reaction L-glutamate 5-semialdehyde + phosphate + NADP(+) = L-glutamyl 5-phosphate + NADPH + H(+). It participates in amino-acid biosynthesis; L-proline biosynthesis; L-glutamate 5-semialdehyde from L-glutamate: step 2/2. Its function is as follows. Catalyzes the NADPH-dependent reduction of L-glutamate 5-phosphate into L-glutamate 5-semialdehyde and phosphate. The product spontaneously undergoes cyclization to form 1-pyrroline-5-carboxylate. The protein is Gamma-glutamyl phosphate reductase of Syntrophotalea carbinolica (strain DSM 2380 / NBRC 103641 / GraBd1) (Pelobacter carbinolicus).